A 308-amino-acid polypeptide reads, in one-letter code: 4-hydroxy-3-methylbut-2-enyl diphosphate reductase 2 (308 aa).

Cys-12 provides a ligand contact to [4Fe-4S] cluster. 2 residues coordinate (2E)-4-hydroxy-3-methylbut-2-enyl diphosphate: His-41 and His-74. Residues His-41 and His-74 each coordinate dimethylallyl diphosphate. Isopentenyl diphosphate is bound by residues His-41 and His-74. Residue Cys-96 participates in [4Fe-4S] cluster binding. His-124 lines the (2E)-4-hydroxy-3-methylbut-2-enyl diphosphate pocket. A dimethylallyl diphosphate-binding site is contributed by His-124. Residue His-124 coordinates isopentenyl diphosphate. Glu-126 serves as the catalytic Proton donor. Position 164 (Thr-164) interacts with (2E)-4-hydroxy-3-methylbut-2-enyl diphosphate. A [4Fe-4S] cluster-binding site is contributed by Cys-194. The (2E)-4-hydroxy-3-methylbut-2-enyl diphosphate site is built by Ser-222, Ser-223, Asn-224, and Ser-266. The dimethylallyl diphosphate site is built by Ser-222, Ser-223, Asn-224, and Ser-266. Ser-222, Ser-223, Asn-224, and Ser-266 together coordinate isopentenyl diphosphate.

It belongs to the IspH family. Requires [4Fe-4S] cluster as cofactor.

The enzyme catalyses isopentenyl diphosphate + 2 oxidized [2Fe-2S]-[ferredoxin] + H2O = (2E)-4-hydroxy-3-methylbut-2-enyl diphosphate + 2 reduced [2Fe-2S]-[ferredoxin] + 2 H(+). It carries out the reaction dimethylallyl diphosphate + 2 oxidized [2Fe-2S]-[ferredoxin] + H2O = (2E)-4-hydroxy-3-methylbut-2-enyl diphosphate + 2 reduced [2Fe-2S]-[ferredoxin] + 2 H(+). Its pathway is isoprenoid biosynthesis; dimethylallyl diphosphate biosynthesis; dimethylallyl diphosphate from (2E)-4-hydroxy-3-methylbutenyl diphosphate: step 1/1. It participates in isoprenoid biosynthesis; isopentenyl diphosphate biosynthesis via DXP pathway; isopentenyl diphosphate from 1-deoxy-D-xylulose 5-phosphate: step 6/6. Its function is as follows. Catalyzes the conversion of 1-hydroxy-2-methyl-2-(E)-butenyl 4-diphosphate (HMBPP) into a mixture of isopentenyl diphosphate (IPP) and dimethylallyl diphosphate (DMAPP). Acts in the terminal step of the DOXP/MEP pathway for isoprenoid precursor biosynthesis. The protein is 4-hydroxy-3-methylbut-2-enyl diphosphate reductase 2 of Bradyrhizobium diazoefficiens (strain JCM 10833 / BCRC 13528 / IAM 13628 / NBRC 14792 / USDA 110).